The primary structure comprises 456 residues: Neurexin-3-beta (456 aa).

The N-terminal stretch at 1-35 is a signal peptide; the sequence is MHLRIHARRNPPRRPAWTLGIWSLFWGCIVSSVWS. The Extracellular segment spans residues 36 to 381; that stretch reads SSNVASSSSS…EVIRESSSTT (346 aa). The segment at 41 to 63 is disordered; sequence SSSSSPGSHSQHEHHFHGSKHHS. Positions 52-63 are enriched in basic residues; it reads HEHHFHGSKHHS. The region spanning 82-282 is the Laminin G-like domain; sequence ATYIFGKSGG…NPNIKINGSV (201 aa). Ca(2+)-binding residues include D134 and I151. An N-linked (GlcNAc...) asparagine glycan is attached at N181. 2 residues coordinate Ca(2+): I233 and N235. Residues N279 and N323 are each glycosylated (N-linked (GlcNAc...) asparagine). Residues 316 to 340 form a disordered region; that stretch reads ATTTTRKNRSTASIQPTSDDLVSSA. Residues 325–340 are compositionally biased toward polar residues; sequence STASIQPTSDDLVSSA. An O-linked (Xyl...) (heparan sulfate) serine glycan is attached at S339. Residues 382–402 traverse the membrane as a helical segment; sequence GMVVGIVAAAALCILILLYAM. The Cytoplasmic segment spans residues 403–456; the sequence is YKYRNRDEGSYQVDETRNYISNSAQSNGTLLKEKPPSSKGGHKKQKNKDKEYYV. The tract at residues 424–456 is disordered; sequence NSAQSNGTLLKEKPPSSKGGHKKQKNKDKEYYV.

Belongs to the neurexin family. Weakly interacts with CBLN1 and CBLN2. Very weak binding, if any, to CBLN4. Specific isoforms bind neuroligins NLGN1, NLGN2 and NLGN3. Interacts with CLSTN3. In terms of processing, processed by alpha-secretase leading to the formation of an extracellular soluble protein as well as a C-terminal membrane-embedded fragment (CTF). Proteolysis of these CTFs by gamma-secretase releases intracellular domains (ICDs) and extracellular peptides. O-glycosylated; contains heparan sulfate. Heparan sulfate attachment is required for synapse development by mediating interactions with neuroligins.

It localises to the presynaptic cell membrane. Its subcellular location is the secreted. Functionally, neuronal cell surface protein that may be involved in cell recognition and cell adhesion. May mediate intracellular signaling. Functions as part of a trans-synaptic complex by binding to cerebellins and postsynaptic GRID1. This interaction helps regulate the activity of NMDA and AMPA receptors at hippocampal synapses without affecting synapse formation. NRXN3B-CBLN2-GRID1 complex transduce presynaptic signals into postsynaptic AMPAR response. The sequence is that of Neurexin-3-beta (NRXN3) from Bos taurus (Bovine).